The sequence spans 110 residues: Insulin growth factor-like family member 1 (110 aa).

Residues 1–24 (MAPRGCIVAVFAIFCISRLLCSHG) form the signal peptide. Asn71 carries N-linked (GlcNAc...) asparagine glycosylation.

The protein belongs to the IGFL family. As to quaternary structure, homodimer; disulfide-linked. In terms of tissue distribution, detected in ovary and spinal cord.

The protein resides in the secreted. In terms of biological role, probable ligand of the IGFLR1 cell membrane receptor. This is Insulin growth factor-like family member 1 (IGFL1) from Homo sapiens (Human).